We begin with the raw amino-acid sequence, 389 residues long: Diaminopimelate decarboxylase (389 aa).

Residue Lys-58 is modified to N6-(pyridoxal phosphate)lysine. Residues Gly-233 and 271-274 (ELGR) contribute to the pyridoxal 5'-phosphate site. Arg-274, Arg-310, Tyr-314, Glu-342, and Tyr-370 together coordinate substrate. Tyr-370 is a pyridoxal 5'-phosphate binding site.

This sequence belongs to the Orn/Lys/Arg decarboxylase class-II family. LysA subfamily. In terms of assembly, homodimer. Requires pyridoxal 5'-phosphate as cofactor.

The catalysed reaction is meso-2,6-diaminopimelate + H(+) = L-lysine + CO2. It functions in the pathway amino-acid biosynthesis; L-lysine biosynthesis via DAP pathway; L-lysine from DL-2,6-diaminopimelate: step 1/1. Functionally, specifically catalyzes the decarboxylation of meso-diaminopimelate (meso-DAP) to L-lysine. The protein is Diaminopimelate decarboxylase of Francisella tularensis subsp. holarctica (strain LVS).